Consider the following 701-residue polypeptide: Sulfate anion transporter 1 (701 aa).

Positions 1-20 (MDESPEPLQQGRGPVPVRRQ) are disordered. Helical transmembrane passes span 68–90 (YLAGDVMSGLVIGIILVPQAIAY) and 94–116 (AGLQPIYSLYTSFFANLIYFLMG). N-linked (GlcNAc...) asparagine glycans are attached at residues Asn158 and Asn163. 7 consecutive transmembrane segments (helical) span residues 176-198 (YAIRVATALTLMTGLYQVLMGVL), 255-277 (GAGQANVCDVVTSTVCLAVLLAA), 290-309 (VPLPTELLVIVVATLVSHFG), 342-364 (ALDAVALALVAAAFSISLAEMFA), 377-399 (LLAVGCCNVLPAFLHCFATSAAL), 412-434 (TQLSSVVSATVVLLVLLALAPLF), and 472-494 (LVWAGTAATCMLVSTEAGLLAGV). An STAS domain is found at 527–687 (EFEGLVPEPG…LSVHDAVQTA (161 aa)).

It belongs to the SLC26A/SulP transporter (TC 2.A.53) family. In terms of tissue distribution, expressed most abundantly in the kidney and liver, with lower levels in the pancreas, testis, brain, small intestine, colon, and lung.

The protein resides in the cell membrane. The protein localises to the basolateral cell membrane. It catalyses the reaction thiosulfate(in) + sulfate(out) = thiosulfate(out) + sulfate(in). It carries out the reaction 2 hydrogencarbonate(out) + sulfate(in) = 2 hydrogencarbonate(in) + sulfate(out). The catalysed reaction is oxalate(in) + sulfate(out) = oxalate(out) + sulfate(in). The enzyme catalyses oxalate(in) + 2 hydrogencarbonate(out) = oxalate(out) + 2 hydrogencarbonate(in). Its function is as follows. Sodium-independent sulfate anion transporter. Can transport other anions including bicarbonate, thiosulfate and oxalate by mediating sulfate-thiosulfate, sulfate-hydrogencarbonate and sulfate-oxalate anion exchange. Mediates oxalate-hydrogencarbonate anion exchange. The chain is Sulfate anion transporter 1 (SLC26A1) from Homo sapiens (Human).